The primary structure comprises 94 residues: Pyrimidine/purine nucleoside phosphorylase (94 aa).

This sequence belongs to the nucleoside phosphorylase PpnP family.

The catalysed reaction is a purine D-ribonucleoside + phosphate = a purine nucleobase + alpha-D-ribose 1-phosphate. It catalyses the reaction adenosine + phosphate = alpha-D-ribose 1-phosphate + adenine. The enzyme catalyses cytidine + phosphate = cytosine + alpha-D-ribose 1-phosphate. It carries out the reaction guanosine + phosphate = alpha-D-ribose 1-phosphate + guanine. The catalysed reaction is inosine + phosphate = alpha-D-ribose 1-phosphate + hypoxanthine. It catalyses the reaction thymidine + phosphate = 2-deoxy-alpha-D-ribose 1-phosphate + thymine. The enzyme catalyses uridine + phosphate = alpha-D-ribose 1-phosphate + uracil. It carries out the reaction xanthosine + phosphate = alpha-D-ribose 1-phosphate + xanthine. Functionally, catalyzes the phosphorolysis of diverse nucleosides, yielding D-ribose 1-phosphate and the respective free bases. Can use uridine, adenosine, guanosine, cytidine, thymidine, inosine and xanthosine as substrates. Also catalyzes the reverse reactions. This chain is Pyrimidine/purine nucleoside phosphorylase, found in Psychromonas ingrahamii (strain DSM 17664 / CCUG 51855 / 37).